Here is a 112-residue protein sequence, read N- to C-terminus: Secretoglobin family 2B member 24 (112 aa).

An N-terminal signal peptide occupies residues 1–23 (MKGTLLLLALLMIGELGFHTTEA).

This sequence belongs to the secretoglobin family. As to expression, expressed in lacrimal gland, at higher level in males than females.

The protein resides in the secreted. The chain is Secretoglobin family 2B member 24 (Scgb2b24) from Mus musculus (Mouse).